The primary structure comprises 155 residues: Photosystem I reaction center subunit XI (155 aa).

A run of 2 helical transmembrane segments spans residues 80–102 and 117–139; these read LISGIALILVATACLAAYGLVSF and GWSQFTAGFFVGAMGSAFVAFFL.

It belongs to the PsaL family.

Its subcellular location is the cellular thylakoid membrane. This chain is Photosystem I reaction center subunit XI, found in Thermosynechococcus vestitus (strain NIES-2133 / IAM M-273 / BP-1).